We begin with the raw amino-acid sequence, 527 residues long: Probable protein kinase UbiB (527 aa).

A helical transmembrane segment spans residues 23-43 (ELLLELPLPFWLRALSWLLPW). The region spanning 125 to 488 (RFDSQPLASA…ESDARDQWPL (364 aa)) is the Protein kinase domain. Residues 131-139 (LASASVAQV) and K153 each bind ATP. The active-site Proton acceptor is D288. A helical transmembrane segment spans residues 504–524 (LAPLLATWPAWLMVGGGLYLV).

Belongs to the ABC1 family. UbiB subfamily.

The protein resides in the cell inner membrane. It functions in the pathway cofactor biosynthesis; ubiquinone biosynthesis [regulation]. Functionally, is probably a protein kinase regulator of UbiI activity which is involved in aerobic coenzyme Q (ubiquinone) biosynthesis. This chain is Probable protein kinase UbiB, found in Ectopseudomonas mendocina (strain ymp) (Pseudomonas mendocina).